The primary structure comprises 365 residues: Serpentine receptor class epsilon-21 (365 aa).

7 helical membrane-spanning segments follow: residues 49–69 (ILIN…VFCI), 82–102 (IIIS…FVFI), 116–136 (LLFW…HTLL), 158–178 (VWIA…YAFL), 189–209 (IFIV…IIYF), 250–270 (VVVV…PIIL), and 292–314 (PLVV…LSYY).

This sequence belongs to the nematode receptor-like protein sre family.

The protein localises to the membrane. This chain is Serpentine receptor class epsilon-21 (sre-21), found in Caenorhabditis elegans.